The following is a 132-amino-acid chain: Small ribosomal subunit protein uS8 (132 aa).

Belongs to the universal ribosomal protein uS8 family. In terms of assembly, part of the 30S ribosomal subunit. Contacts proteins S5 and S12.

In terms of biological role, one of the primary rRNA binding proteins, it binds directly to 16S rRNA central domain where it helps coordinate assembly of the platform of the 30S subunit. This chain is Small ribosomal subunit protein uS8, found in Rickettsia rickettsii (strain Sheila Smith).